The following is a 317-amino-acid chain: MLSRSQDKTMTKPISPLLPIAYSKEVASAKQRGAPLVALESTIITHGMPYPGNIEMARSVEAIIREQGAVPATIAVIHGTLHIGLEAAELEQLAKATEVMKVSRADLAFAIAERRTGATTVAATMIAAARAGIRVFATGGIGGVHRGAEESFDISADLEELARTGVIVVCAGAKAILDIPKTLEVLETRGVPVVTYESEEFPAFWSRSSGIRSPLSLNSPAAIANFQTVREQLGIDGGMLVANPVPEADEIASEEMEIYIERALDSAERDEVTGKAVTPYLLSTIFDLTDGQSLKTNIALVENNARLAAEIAVALGE.

Glutamate 40 acts as the Proton donor in catalysis. Substrate is bound by residues lysine 101 and valine 121. Aspartate 153 is a Mn(2+) binding site. Position 155–157 (155–157) interacts with substrate; that stretch reads SAD. The active-site Nucleophile is the lysine 174.

The protein belongs to the pseudouridine-5'-phosphate glycosidase family. In terms of assembly, homotrimer. Requires Mn(2+) as cofactor.

The enzyme catalyses D-ribose 5-phosphate + uracil = psi-UMP + H2O. Functionally, catalyzes the reversible cleavage of pseudouridine 5'-phosphate (PsiMP) to ribose 5-phosphate and uracil. Functions biologically in the cleavage direction, as part of a pseudouridine degradation pathway. The sequence is that of Pseudouridine-5'-phosphate glycosidase 1 from Rhizobium johnstonii (strain DSM 114642 / LMG 32736 / 3841) (Rhizobium leguminosarum bv. viciae).